We begin with the raw amino-acid sequence, 130 residues long: Small ribosomal subunit protein uS9 (130 aa).

The protein belongs to the universal ribosomal protein uS9 family.

The protein is Small ribosomal subunit protein uS9 of Shewanella piezotolerans (strain WP3 / JCM 13877).